The sequence spans 470 residues: Cholesterol 7-desaturase nvd 1 (470 aa).

The chain crosses the membrane as a helical span at residues 67-87 (LALCIAGFSVLMYFLYVLVFV). Positions 136–238 (FRLVDSQQLE…CREVNKAIFV (103 aa)) constitute a Rieske domain. [2Fe-2S] cluster contacts are provided by C176, H178, C196, and H199.

The protein belongs to the cholesterol 7-desaturase family. Requires [2Fe-2S] cluster as cofactor.

It localises to the membrane. The enzyme catalyses cholesterol + NADPH + O2 + H(+) = 7-dehydrocholesterol + NADP(+) + 2 H2O. It carries out the reaction cholesterol + NADH + O2 + H(+) = 7-dehydrocholesterol + NAD(+) + 2 H2O. The protein operates within steroid hormone biosynthesis; dafachronic acid biosynthesis. Catalyzes the production of 7-dehydrocholesterol (7-DHC or cholesta-5,7-dien-3beta-ol) by inserting a double bond (desaturating) at the C7-C8 single bond of cholesterol. Essential regulator of steroid biosynthesis as this reaction is the first step in the synthesis of the steroid hormone Delta(7)-dafachronic acid. This is Cholesterol 7-desaturase nvd 1 from Ciona intestinalis (Transparent sea squirt).